The primary structure comprises 123 residues: Large ribosomal subunit protein bL12 (123 aa).

This sequence belongs to the bacterial ribosomal protein bL12 family. As to quaternary structure, homodimer. Part of the ribosomal stalk of the 50S ribosomal subunit. Forms a multimeric L10(L12)X complex, where L10 forms an elongated spine to which 2 to 4 L12 dimers bind in a sequential fashion. Binds GTP-bound translation factors.

Its function is as follows. Forms part of the ribosomal stalk which helps the ribosome interact with GTP-bound translation factors. Is thus essential for accurate translation. The chain is Large ribosomal subunit protein bL12 from Dechloromonas aromatica (strain RCB).